The following is a 710-amino-acid chain: Probable GTP diphosphokinase RSH2, chloroplastic (710 aa).

The N-terminal 63 residues, 1 to 63, are a transit peptide targeting the chloroplast; sequence MVVATTIALY…SSLFSSASVK (63 aa). Residues 233–337 enclose the HD domain; sequence YLQHCVETAM…IKLADRLHNM (105 aa).

This sequence belongs to the RelA/SpoT family.

It localises to the plastid. The protein resides in the chloroplast. The enzyme catalyses GTP + ATP = guanosine 3'-diphosphate 5'-triphosphate + AMP. In terms of biological role, probable ppGpp (guanosine 3'-diphosphate 5'-diphosphate) synthetase that may be involved in a rapid plant ppGpp-mediated response to pathogens and other stresses. The chain is Probable GTP diphosphokinase RSH2, chloroplastic (RSH2) from Arabidopsis thaliana (Mouse-ear cress).